The following is a 305-amino-acid chain: uncharacterized protein (305 aa).

Residues 53–185 (SGRIGDGDDG…TGPRSSRTVG (133 aa)) are disordered. Composition is skewed to basic and acidic residues over residues 95-116 (VEER…ERPT) and 128-142 (GSER…RSEG). The segment covering 161–171 (GNTQAPSQSAE) has biased composition (polar residues). The segment at 260–302 (CAICMSNFIKNQRLRVLPCDHRFHVGCVDKWLLGHSNKCPVCR) adopts an RING-type; atypical zinc-finger fold.

This is an uncharacterized protein from Encephalitozoon cuniculi (strain GB-M1) (Microsporidian parasite).